The chain runs to 364 residues: Chorismate synthase (364 aa).

Arg48 is an NADP(+) binding site. Residues 131-133 (RAS), 243-244 (NA), Gly288, 303-307 (KPTSS), and Arg329 each bind FMN.

This sequence belongs to the chorismate synthase family. In terms of assembly, homotetramer. FMNH2 is required as a cofactor.

The catalysed reaction is 5-O-(1-carboxyvinyl)-3-phosphoshikimate = chorismate + phosphate. It functions in the pathway metabolic intermediate biosynthesis; chorismate biosynthesis; chorismate from D-erythrose 4-phosphate and phosphoenolpyruvate: step 7/7. In terms of biological role, catalyzes the anti-1,4-elimination of the C-3 phosphate and the C-6 proR hydrogen from 5-enolpyruvylshikimate-3-phosphate (EPSP) to yield chorismate, which is the branch point compound that serves as the starting substrate for the three terminal pathways of aromatic amino acid biosynthesis. This reaction introduces a second double bond into the aromatic ring system. The chain is Chorismate synthase from Bartonella bacilliformis (strain ATCC 35685 / KC583 / Herrer 020/F12,63).